A 156-amino-acid chain; its full sequence is MSRRGTAEKKKIAKSDPIYRNRVVNMLVNRIMKHGKKSLAYLIIYRAMKRIQQKTKTNPLSVLREAIRRVTPNLAVKARRVSGSTHQVPIEIESTQGKELAIRWLLAASRKRPGRNMAFKLSSELVDAAKGSGDAIRKKEETHRMAEANRTFAHFR.

Belongs to the universal ribosomal protein uS7 family. Part of the 30S ribosomal subunit.

It is found in the plastid. Its subcellular location is the chloroplast. In terms of biological role, one of the primary rRNA binding proteins, it binds directly to 16S rRNA where it nucleates assembly of the head domain of the 30S subunit. The sequence is that of Small ribosomal subunit protein uS7c (rps7) from Pisum sativum (Garden pea).